A 130-amino-acid polypeptide reads, in one-letter code: Large ribosomal subunit protein bL12 (130 aa).

This sequence belongs to the bacterial ribosomal protein bL12 family. In terms of assembly, homodimer. Part of the ribosomal stalk of the 50S ribosomal subunit. Forms a multimeric L10(L12)X complex, where L10 forms an elongated spine to which 2 to 4 L12 dimers bind in a sequential fashion. Binds GTP-bound translation factors.

Functionally, forms part of the ribosomal stalk which helps the ribosome interact with GTP-bound translation factors. Is thus essential for accurate translation. The chain is Large ribosomal subunit protein bL12 from Thermobifida fusca (strain YX).